A 420-amino-acid chain; its full sequence is LanC-like protein 3 homolog (420 aa).

Belongs to the LanC-like protein family.

The polypeptide is LanC-like protein 3 homolog (Drosophila pseudoobscura pseudoobscura (Fruit fly)).